Here is a 314-residue protein sequence, read N- to C-terminus: Cyclic di-GMP binding protein TDE_0214 (314 aa).

The 89-residue stretch at 146-234 (QKRRNERVVI…KTVRTEPVEG (89 aa)) folds into the PilZ domain. The span at 288 to 300 (TPVSSPIGTNTAP) shows a compositional bias: polar residues. The disordered stretch occupies residues 288 to 314 (TPVSSPIGTNTAPLTPPPADSAPEQIS).

Cyclic-di-GMP binding protein that plays important roles in motility, chemotaxis, biofilm formation and virulence. This chain is Cyclic di-GMP binding protein TDE_0214, found in Treponema denticola (strain ATCC 35405 / DSM 14222 / CIP 103919 / JCM 8153 / KCTC 15104).